A 246-amino-acid chain; its full sequence is Mediator of RNA polymerase II transcription subunit 6 (246 aa).

2 disordered regions span residues 165 to 186 (MKKK…RSTN) and 207 to 246 (EALE…ATTK). Composition is skewed to basic and acidic residues over residues 166-184 (KKKE…EERS) and 208-224 (ALEK…KPEE).

It belongs to the Mediator complex subunit 6 family. In terms of assembly, component of the Mediator complex. Interacts with let-19/mdt-13. Interacts with RNA polymerase II. Interacts with mdt-28.

The protein resides in the nucleus. Functionally, component of the Mediator complex, a coactivator involved in the regulated transcription of nearly all RNA polymerase II-dependent genes. Mediator functions as a bridge to convey information from gene-specific regulatory proteins to the basal RNA polymerase II transcription machinery. Mediator is recruited to promoters by direct interactions with regulatory proteins and serves as a scaffold for the assembly of a functional preinitiation complex with RNA polymerase II and the general transcription factors. The polypeptide is Mediator of RNA polymerase II transcription subunit 6 (mdt-6) (Caenorhabditis briggsae).